The primary structure comprises 253 residues: Uracil-DNA glycosylase (253 aa).

Residue aspartate 79 is the Proton acceptor of the active site.

It belongs to the uracil-DNA glycosylase (UDG) superfamily. UNG family.

Its subcellular location is the cytoplasm. The enzyme catalyses Hydrolyzes single-stranded DNA or mismatched double-stranded DNA and polynucleotides, releasing free uracil.. Functionally, excises uracil residues from the DNA which can arise as a result of misincorporation of dUMP residues by DNA polymerase or due to deamination of cytosine. The polypeptide is Uracil-DNA glycosylase (Xylella fastidiosa (strain 9a5c)).